We begin with the raw amino-acid sequence, 264 residues long: Cancer/testis antigen 55 (264 aa).

The tract at residues 242-264 (SSSGFQDDGGLGRPKRERRSQSI) is disordered. The span at 254–264 (RPKRERRSQSI) shows a compositional bias: basic residues.

Interacts with GABARAP; this interaction may be important for GABARAP protein stability. Isoform 1 interacts with LAMP2; this interaction may be important for LAMP2 protein stability. As to expression, testis-specific. Expressed in spermatozoa (at protein level).

It is found in the cytoplasm. It localises to the cytoplasmic vesicle. Its subcellular location is the secretory vesicle. The protein localises to the acrosome. The protein resides in the cell projection. It is found in the cilium. It localises to the flagellum. In terms of biological role, plays a role in spermatogenesis, possibly acting in the regulation of the autophagy pathway. This chain is Cancer/testis antigen 55 (CT55), found in Homo sapiens (Human).